The sequence spans 409 residues: MKAEILCVGTELLLGDIVNTNAQYISKELANMGIEVYHHSVIGDNEDRLLKELERAFNYCDLVITTGGLGPTKDDLTKESVAKFFQEDLILHEKSLKQIEKRLSCFNKSMTESNKKQAYFPKNCEILENPNGTAPGFIIEKDNKIAVILPGPPYEMQPMFENKVIPYLEKLTNSTIKSKVLRITGIGESDVADLISDILENQTNPTVAPYAKQGETTLRITAKANSEEKALSLIVPIEKKIRQILGTNIYGSGETSLEEVVANMLVKRNLTIATAESCTGGLLAGKLISFPGISSVFLEGAITYSNESKINRLNVKKETLEKYTAVSKEVALEMAEGIAKSAGTNIGISTTGVAGPSGGTYDKPIGLIYIGLYINGKTSVKELNYSGSRQFIRNITVTRALDFLRKNLI.

This sequence belongs to the CinA family.

The sequence is that of Putative competence-damage inducible protein from Clostridium botulinum (strain Loch Maree / Type A3).